The primary structure comprises 185 residues: Capsid protein (185 aa).

The interval 136 to 185 (NAPILSTLPETTVVRRRDRGRSPRRRTPSPRRRRSQSPRRRRSQSRESQC) is disordered. The span at 149–178 (VRRRDRGRSPRRRTPSPRRRRSQSPRRRRS) shows a compositional bias: basic residues. 3 positions are modified to phosphoserine; by host: S157, S164, and S172. The 1; half-length repeat unit spans residues 157–163 (SPRRRTP). A 3 X 8 AA repeats of S-P-R-R-R-[PR]-S-Q region spans residues 157–179 (SPRRRTPSPRRRRSQSPRRRRSQ). Residues 160 to 177 (RRTPSPRRRRSQSPRRRR) carry the Bipartite nuclear localization signal motif. 2 repeat units span residues 164 to 171 (SPRRRRSQ) and 172 to 179 (SPRRRRSQ). Positions 179-185 (QSRESQC) are RNA binding.

It belongs to the orthohepadnavirus core antigen family. As to quaternary structure, homodimerizes, then multimerizes. Interacts with cytosol exposed regions of viral L glycoprotein present in the reticulum-to-Golgi compartment. Interacts with human FLNB. Phosphorylated form interacts with host importin alpha; this interaction depends on the exposure of the NLS, which itself depends upon genome maturation and/or phosphorylation of the capsid protein. Interacts with host NUP153. In terms of processing, phosphorylated by host SRPK1, SRPK2, and maybe protein kinase C or GAPDH. Phosphorylation is critical for pregenomic RNA packaging. Protein kinase C phosphorylation is stimulated by HBx protein and may play a role in transport of the viral genome to the nucleus at the late step during the viral replication cycle.

The protein resides in the virion. It localises to the host cytoplasm. In terms of biological role, self assembles to form an icosahedral capsid. Most capsids appear to be large particles with an icosahedral symmetry of T=4 and consist of 240 copies of capsid protein, though a fraction forms smaller T=3 particles consisting of 180 capsid proteins. Entering capsids are transported along microtubules to the nucleus. Phosphorylation of the capsid is thought to induce exposure of nuclear localization signal in the C-terminal portion of the capsid protein that allows binding to the nuclear pore complex via the importin (karyopherin-) alpha and beta. Capsids are imported in intact form through the nuclear pore into the nuclear basket, where it probably binds NUP153. Only capsids that contain the mature viral genome can release the viral DNA and capsid protein into the nucleoplasm. Immature capsids get stuck in the basket. Capsids encapsulate the pre-genomic RNA and the P protein. Pre-genomic RNA is reverse-transcribed into DNA while the capsid is still in the cytoplasm. The capsid can then either be directed to the nucleus, providing more genomes for transcription, or bud through the endoplasmic reticulum to provide new virions. This Homo sapiens (Human) protein is Capsid protein.